Reading from the N-terminus, the 419-residue chain is UDP-N-acetylglucosamine 1-carboxyvinyltransferase (419 aa).

Residue Lys-22–Asn-23 participates in phosphoenolpyruvate binding. Arg-91 serves as a coordination point for UDP-N-acetyl-alpha-D-glucosamine. The active-site Proton donor is the Cys-115. Cys-115 carries the 2-(S-cysteinyl)pyruvic acid O-phosphothioketal modification. Residues Arg-120 to Leu-124, Lys-160 to Val-163, Asp-305, and Val-327 each bind UDP-N-acetyl-alpha-D-glucosamine.

The protein belongs to the EPSP synthase family. MurA subfamily.

The protein localises to the cytoplasm. The catalysed reaction is phosphoenolpyruvate + UDP-N-acetyl-alpha-D-glucosamine = UDP-N-acetyl-3-O-(1-carboxyvinyl)-alpha-D-glucosamine + phosphate. The protein operates within cell wall biogenesis; peptidoglycan biosynthesis. Cell wall formation. Adds enolpyruvyl to UDP-N-acetylglucosamine. The polypeptide is UDP-N-acetylglucosamine 1-carboxyvinyltransferase (Escherichia coli (strain K12 / MC4100 / BW2952)).